The sequence spans 134 residues: Small ribosomal subunit protein uS8c (134 aa).

The protein belongs to the universal ribosomal protein uS8 family. As to quaternary structure, part of the 30S ribosomal subunit.

The protein localises to the plastid. It localises to the chloroplast. Functionally, one of the primary rRNA binding proteins, it binds directly to 16S rRNA central domain where it helps coordinate assembly of the platform of the 30S subunit. The protein is Small ribosomal subunit protein uS8c (rps8) of Nicotiana tabacum (Common tobacco).